We begin with the raw amino-acid sequence, 164 residues long: CB1 cannabinoid receptor-interacting protein 1 (164 aa).

This sequence belongs to the CNRIP family. Interacts with the cannabinoid receptor CNR1 (via C-terminus). Does not interact with cannabinoid receptor CNR2.

In terms of biological role, suppresses cannabinoid receptor CNR1-mediated tonic inhibition of voltage-gated calcium channels. The polypeptide is CB1 cannabinoid receptor-interacting protein 1 (CNRIP1) (Bos taurus (Bovine)).